We begin with the raw amino-acid sequence, 473 residues long: Fumarate hydratase class II (473 aa).

Residues 104–106 (SGT), 128–131 (HPND), 138–140 (SSN), and Thr-186 each bind substrate. Catalysis depends on His-187, which acts as the Proton donor/acceptor. Ser-318 is an active-site residue. Substrate is bound by residues Ser-319 and 324–326 (KVN).

It belongs to the class-II fumarase/aspartase family. Fumarase subfamily. In terms of assembly, homotetramer.

Its subcellular location is the cytoplasm. The catalysed reaction is (S)-malate = fumarate + H2O. Its pathway is carbohydrate metabolism; tricarboxylic acid cycle; (S)-malate from fumarate: step 1/1. Its function is as follows. Involved in the TCA cycle. Catalyzes the stereospecific interconversion of fumarate to L-malate. The protein is Fumarate hydratase class II of Corynebacterium glutamicum (strain ATCC 13032 / DSM 20300 / JCM 1318 / BCRC 11384 / CCUG 27702 / LMG 3730 / NBRC 12168 / NCIMB 10025 / NRRL B-2784 / 534).